A 265-amino-acid polypeptide reads, in one-letter code: uncharacterized protein (265 aa).

Glu-47 serves as a coordination point for thiamine diphosphate. The thiamine pyrophosphate binding stretch occupies residues 204 to 247 (QHQMWLVQHILRVARHCGFTVTTMEMTLIETQVRLKITVKSDRT).

It belongs to the TPP enzyme family. It depends on Mg(2+) as a cofactor. Thiamine diphosphate is required as a cofactor.

In terms of biological role, truncated acetolactase synthase; no longer catalytically active. This is an uncharacterized protein from Haemophilus influenzae (strain ATCC 51907 / DSM 11121 / KW20 / Rd).